Consider the following 122-residue polypeptide: Glycine cleavage system H protein (122 aa).

The Lipoyl-binding domain maps to 19-101 (VVTVGITNYA…EKEGWLWKMT (83 aa)). Lysine 60 bears the N6-lipoyllysine mark.

It belongs to the GcvH family. The glycine cleavage system is composed of four proteins: P, T, L and H. Requires (R)-lipoate as cofactor.

In terms of biological role, the glycine cleavage system catalyzes the degradation of glycine. The H protein shuttles the methylamine group of glycine from the P protein to the T protein. This Bartonella quintana (strain Toulouse) (Rochalimaea quintana) protein is Glycine cleavage system H protein.